Here is a 294-residue protein sequence, read N- to C-terminus: Protoheme IX farnesyltransferase (294 aa).

9 consecutive transmembrane segments (helical) span residues 13–33 (IIFG…KGVI), 35–55 (YPLF…GCVF), 84–104 (ISLI…YAAA), 107–127 (LAMQ…SLYM), 132–152 (VYGT…GYCA), 162–182 (LILL…IAIF), 208–228 (IILY…SGYA), 229–249 (GYKY…MALS), and 264–284 (FIFS…DPHV).

The protein belongs to the UbiA prenyltransferase family. Protoheme IX farnesyltransferase subfamily.

The protein localises to the cell inner membrane. The enzyme catalyses heme b + (2E,6E)-farnesyl diphosphate + H2O = Fe(II)-heme o + diphosphate. Its pathway is porphyrin-containing compound metabolism; heme O biosynthesis; heme O from protoheme: step 1/1. Its function is as follows. Converts heme B (protoheme IX) to heme O by substitution of the vinyl group on carbon 2 of heme B porphyrin ring with a hydroxyethyl farnesyl side group. The protein is Protoheme IX farnesyltransferase of Photorhabdus laumondii subsp. laumondii (strain DSM 15139 / CIP 105565 / TT01) (Photorhabdus luminescens subsp. laumondii).